The chain runs to 485 residues: Argininosuccinate lyase (485 aa).

Belongs to the lyase 1 family. Argininosuccinate lyase subfamily.

Its subcellular location is the cytoplasm. The enzyme catalyses 2-(N(omega)-L-arginino)succinate = fumarate + L-arginine. The protein operates within amino-acid biosynthesis; L-arginine biosynthesis; L-arginine from L-ornithine and carbamoyl phosphate: step 3/3. The protein is Argininosuccinate lyase of Nitrosopumilus maritimus (strain SCM1).